The following is a 247-amino-acid chain: 23S rRNA (guanosine-2'-O-)-methyltransferase RlmB (247 aa).

Residues Gly197, Ile217, and Leu226 each contribute to the S-adenosyl-L-methionine site.

It belongs to the class IV-like SAM-binding methyltransferase superfamily. RNA methyltransferase TrmH family. RlmB subfamily.

Its subcellular location is the cytoplasm. The catalysed reaction is guanosine(2251) in 23S rRNA + S-adenosyl-L-methionine = 2'-O-methylguanosine(2251) in 23S rRNA + S-adenosyl-L-homocysteine + H(+). Functionally, specifically methylates the ribose of guanosine 2251 in 23S rRNA. This is 23S rRNA (guanosine-2'-O-)-methyltransferase RlmB from Vibrio cholerae serotype O1 (strain ATCC 39315 / El Tor Inaba N16961).